We begin with the raw amino-acid sequence, 475 residues long: MSSAVVTRFAPSPTGYLHIGGARTALFNWLYARHTGGKMLLRIEDTDRERSTKGAIDAILDGLSWLGLDWDGDVVFQFARAERHRAVAEELLAAGRAYHCYATAEELAQMRETARAEGRAPRYDGRWRDRDPSEAPAGVKPVIRLRAPIEGETVVEDAVQGRVTWANKDLDDLVLLRSDGTPTYMLAVVVDDHDMGVTQIIRGDDHLTNAARQSQIFSALGWDVPRMAHIPLIHGADGAKLSKRHGALGVEAYRDLGYLPAALRNYLVRLGWSHGDQEVFSTEEMVAAFDLGAVGRSAARFDFAKLANLNGLYIRTSADADLVAAIETILPNVGPERGLSAPLQPDLKDKLIQAMPGLKERAKTLIELLDSAYYLYAQRPLALDDKARALLSDEGRGRLAGVRPVLEALPDWSAASTEGAVRQYAESAGCKLGQVAQPLRAALTGRTTSPPLFDVMAVLGREETLARLGDQAPQG.

The short motif at 11-21 (PSPTGYLHIGG) is the 'HIGH' region element. A 'KMSKS' region motif is present at residues 240–244 (KLSKR). Position 243 (K243) interacts with ATP.

The protein belongs to the class-I aminoacyl-tRNA synthetase family. Glutamate--tRNA ligase type 1 subfamily. As to quaternary structure, monomer.

It is found in the cytoplasm. It catalyses the reaction tRNA(Glu) + L-glutamate + ATP = L-glutamyl-tRNA(Glu) + AMP + diphosphate. Its function is as follows. Catalyzes the attachment of glutamate to tRNA(Glu) in a two-step reaction: glutamate is first activated by ATP to form Glu-AMP and then transferred to the acceptor end of tRNA(Glu). This Methylobacterium radiotolerans (strain ATCC 27329 / DSM 1819 / JCM 2831 / NBRC 15690 / NCIMB 10815 / 0-1) protein is Glutamate--tRNA ligase 1.